The sequence spans 716 residues: Putative proline--tRNA ligase C19C7.06 (716 aa).

The tract at residues 655 to 675 (KNSARQVNGDEPEDEKAPSMG) is disordered.

It belongs to the class-II aminoacyl-tRNA synthetase family.

The protein localises to the cytoplasm. It carries out the reaction tRNA(Pro) + L-proline + ATP = L-prolyl-tRNA(Pro) + AMP + diphosphate. The polypeptide is Putative proline--tRNA ligase C19C7.06 (prs1) (Schizosaccharomyces pombe (strain 972 / ATCC 24843) (Fission yeast)).